A 142-amino-acid polypeptide reads, in one-letter code: uncharacterized protein (142 aa).

As to quaternary structure, homodimer.

This is an uncharacterized protein from Bacillus subtilis (strain 168).